A 642-amino-acid polypeptide reads, in one-letter code: Threonine--tRNA ligase (642 aa).

A TGS domain is found at 1-61 (MPVITLPDGS…ENDAQLAIIT (61 aa)). Residues 243 to 534 (DHRKIGKQLD…LTEEFAGFFP (292 aa)) are catalytic. Lysine 286 bears the N6-acetyllysine mark. Zn(2+) is bound by residues cysteine 334, histidine 385, and histidine 511.

It belongs to the class-II aminoacyl-tRNA synthetase family. As to quaternary structure, homodimer. Requires Zn(2+) as cofactor.

It localises to the cytoplasm. It carries out the reaction tRNA(Thr) + L-threonine + ATP = L-threonyl-tRNA(Thr) + AMP + diphosphate + H(+). Functionally, catalyzes the attachment of threonine to tRNA(Thr) in a two-step reaction: L-threonine is first activated by ATP to form Thr-AMP and then transferred to the acceptor end of tRNA(Thr). Also edits incorrectly charged L-seryl-tRNA(Thr). In Escherichia fergusonii (strain ATCC 35469 / DSM 13698 / CCUG 18766 / IAM 14443 / JCM 21226 / LMG 7866 / NBRC 102419 / NCTC 12128 / CDC 0568-73), this protein is Threonine--tRNA ligase.